We begin with the raw amino-acid sequence, 162 residues long: Phospholipase A2 (162 aa).

The signal sequence occupies residues 1–22; that stretch reads MKVLQMFFCVILLCVTSVLVEA. A propeptide spanning residues 23-35 is cleaved from the precursor; the sequence is KSTTKGDETASKR. 6 cysteine pairs are disulfide-bonded: Cys60–Cys155, Cys62–Cys78, Cys77–Cys134, Cys84–Cys127, Cys94–Cys120, and Cys113–Cys125. The Ca(2+) site is built by Tyr61, Gly63, and Gly65. His81 is an active-site residue. Position 82 (Asp82) interacts with Ca(2+). Residue Asp128 is part of the active site.

The protein belongs to the phospholipase A2 family. Group I subfamily. D49 sub-subfamily. Ca(2+) is required as a cofactor. As to expression, expressed both outside and in acontia, a specialised envenomation structure laden with batteries of venom-containing nematocysts found only in the superfamily Metridioidea.

The protein localises to the secreted. Its subcellular location is the nematocyst. The enzyme catalyses a 1,2-diacyl-sn-glycero-3-phosphocholine + H2O = a 1-acyl-sn-glycero-3-phosphocholine + a fatty acid + H(+). Functionally, PLA2 catalyzes the calcium-dependent hydrolysis of the 2-acyl groups in 3-sn-phosphoglycerides. The chain is Phospholipase A2 from Calliactis polypus (Hermit crab anemone).